A 493-amino-acid chain; its full sequence is NADH-quinone oxidoreductase subunit N 2 (493 aa).

A run of 14 helical transmembrane segments spans residues 16–36 (IIPA…DFLI), 45–65 (FLLI…FRQQ), 87–107 (GFAI…AIVS), 119–139 (GEYY…ATGT), 141–161 (LITL…MVGF), 176–196 (LLLG…MYGI), 219–239 (VFLA…AVPF), 258–278 (LSVA…LGPL), 285–305 (WEPL…LAAI), 313–333 (LLAY…VAGN), 340–360 (IAVY…VIIA), 385–405 (AFLM…AGFL), 421–441 (GLAI…FKIV), and 464–484 (CALA…EPFL).

The protein belongs to the complex I subunit 2 family. As to quaternary structure, NDH-1 is composed of 14 different subunits. Subunits NuoA, H, J, K, L, M, N constitute the membrane sector of the complex.

The protein resides in the cell inner membrane. It catalyses the reaction a quinone + NADH + 5 H(+)(in) = a quinol + NAD(+) + 4 H(+)(out). Functionally, NDH-1 shuttles electrons from NADH, via FMN and iron-sulfur (Fe-S) centers, to quinones in the respiratory chain. The immediate electron acceptor for the enzyme in this species is believed to be ubiquinone. Couples the redox reaction to proton translocation (for every two electrons transferred, four hydrogen ions are translocated across the cytoplasmic membrane), and thus conserves the redox energy in a proton gradient. The protein is NADH-quinone oxidoreductase subunit N 2 of Solibacter usitatus (strain Ellin6076).